The primary structure comprises 597 residues: MIDENKKKNTNLNKNEYEEKSILKDLFHFFGKDFCVVQDTCIDFPVIWINKSLLLKVGKFLSSSPKPYNMLFDLHGVDERFRLNRLNLPEADFSIFYHLISIERNSDILIKVPLLKDDLNVSTFISLFPNANWYERETWEMFGIIFDQHPNLTHIIMPNEWKGFPLRKDYPARATEHESFFLDEQKEDLEMENLRFKPELWGMKRKNDNVDFMFLNLGPNHPSAHGAFRIVLQLDGENIVDCVPDIGYHHRGAEKMAERQSWHSYIPYTDRIEYLGGCVNEMPYVLAVEKLANISVPEKVEVIRVMLSELFRINSHLLYISTFIQDVGCMTPVFLAFTDRQKIYDLIEAITGARMHPAWFRIGGVAHDLPKGWNVLLKEFLEWMPKRLKYYVQLALENPILIRRSKGIAQYNQKEALQWGVTGSGLRSTGLDLDVRKWRPYSGYQNYTFEIPIGQGISDCYSRVIIKVEEIYQSLSILKQCLKNMPEGPFKSDHPLTTPPPKERVLKDIDTMITHFLQVSWGPVIPANESFQMIEATKGINSYYLISDGGTMSYRTRIRTPSFPHLQQIPSVIRGSLISDLIVYLGSIDFVMSDVDR.

The tract at residues 1–187 is NADH dehydrogenase I subunit C; sequence MIDENKKKNT…ESFFLDEQKE (187 aa). The segment at 211-597 is NADH dehydrogenase I subunit D; the sequence is DFMFLNLGPN…IDFVMSDVDR (387 aa).

The protein in the N-terminal section; belongs to the complex I 30 kDa subunit family. It in the C-terminal section; belongs to the complex I 49 kDa subunit family. In terms of assembly, NDH-1 is composed of 13 different subunits. Subunits NuoB, CD, E, F, and G constitute the peripheral sector of the complex.

It localises to the cell inner membrane. The enzyme catalyses a quinone + NADH + 5 H(+)(in) = a quinol + NAD(+) + 4 H(+)(out). In terms of biological role, NDH-1 shuttles electrons from NADH, via FMN and iron-sulfur (Fe-S) centers, to quinones in the respiratory chain. The immediate electron acceptor for the enzyme in this species is believed to be ubiquinone. Couples the redox reaction to proton translocation (for every two electrons transferred, four hydrogen ions are translocated across the cytoplasmic membrane), and thus conserves the redox energy in a proton gradient. This Buchnera aphidicola subsp. Schizaphis graminum (strain Sg) protein is NADH-quinone oxidoreductase subunit C/D.